The sequence spans 103 residues: Putative defensin-like protein 305 (103 aa).

The first 31 residues, 1-31 (MREEILEIFLLVNFVFILCTSIMVRIRYVSC), serve as a signal peptide directing secretion. Intrachain disulfides connect Cys-31–Cys-51, Cys-37–Cys-56, and Cys-42–Cys-58.

Belongs to the DEFL family.

The protein localises to the secreted. This chain is Putative defensin-like protein 305, found in Arabidopsis thaliana (Mouse-ear cress).